The chain runs to 438 residues: Cytochrome P450 monooxygenase claJ (438 aa).

C378 contributes to the heme binding site.

It belongs to the cytochrome P450 family. Heme serves as cofactor.

It participates in secondary metabolite biosynthesis. Its function is as follows. Cytochrome P450 monooxygenase; part of the cla gene cluster that produces clavatol and ortho-quinone methide. The clavatol biosynthesis cluster cla and the terrestric acid cluster tra are both involved in the production of peniphenones and penilactones. The non-reducing PKS claF is responsible for the formation of clavatol from successive condensations of 3 malonyl-CoA units, presumably with a simple acetyl-CoA starter unit, and 2 methylation steps. The esterase claE probably collaborates with claF by catalyzing the hydrolysis of ACP-bound acyl intermediates to free the ACP from stalled intermediates. The clavatol oxidase claD then converts clavatol to hydroxyclavatol. Spontaneous dehydration of hydroxyclavatol leads to the accumulation of the highly active ortho-quinone methide. On the other hand, the PKS-NRPS hybrid traA is involved in the formation of crustosic acid, with the help of traB and traD. The polyketide synthase module (PKS) of traA is responsible for the synthesis of the polyketide backbone via the condensation of an acetyl-CoA starter unit with 3 malonyl-CoA units. The downstream nonribosomal peptide synthetase (NRPS) module then amidates the carboxyl end of the polyketide with L-malic acid. Because traA lacks a designated enoylreductase (ER) domain, the required activity is provided the enoyl reductase traG. Crustosic acid undergoes decarboxylation and isomerization to the terrestric acid, catalyzed by the 2-oxoglutarate-dependent dioxygenase traH. Both acids are further converted to the 2 gamma-butyrolactones (R)-5-methyltetronic acid and (S)-5-carboxylmethyltetronic acid, with involvement of the cytochrome P450 monooxygenase claJ. Spontaneous addition of the methide to these gamma-butyrolactones leads to peniphenone D and penilactone D, which undergo again stereospecific attacking by methide to give penilactones A and B. This Penicillium crustosum (Blue mold fungus) protein is Cytochrome P450 monooxygenase claJ.